The following is a 126-amino-acid chain: Phosphoribosyl-AMP cyclohydrolase (126 aa).

D82 contacts Mg(2+). C83 contacts Zn(2+). Mg(2+) is bound by residues D84 and D86. C99 and C106 together coordinate Zn(2+).

The protein belongs to the PRA-CH family. Homodimer. The cofactor is Mg(2+). Requires Zn(2+) as cofactor.

It localises to the cytoplasm. It carries out the reaction 1-(5-phospho-beta-D-ribosyl)-5'-AMP + H2O = 1-(5-phospho-beta-D-ribosyl)-5-[(5-phospho-beta-D-ribosylamino)methylideneamino]imidazole-4-carboxamide. Its pathway is amino-acid biosynthesis; L-histidine biosynthesis; L-histidine from 5-phospho-alpha-D-ribose 1-diphosphate: step 3/9. Its function is as follows. Catalyzes the hydrolysis of the adenine ring of phosphoribosyl-AMP. This is Phosphoribosyl-AMP cyclohydrolase from Micrococcus luteus (strain ATCC 4698 / DSM 20030 / JCM 1464 / CCM 169 / CCUG 5858 / IAM 1056 / NBRC 3333 / NCIMB 9278 / NCTC 2665 / VKM Ac-2230) (Micrococcus lysodeikticus).